A 237-amino-acid chain; its full sequence is Leucyl/phenylalanyl-tRNA--protein transferase (237 aa).

Belongs to the L/F-transferase family.

The protein localises to the cytoplasm. It catalyses the reaction N-terminal L-lysyl-[protein] + L-leucyl-tRNA(Leu) = N-terminal L-leucyl-L-lysyl-[protein] + tRNA(Leu) + H(+). The catalysed reaction is N-terminal L-arginyl-[protein] + L-leucyl-tRNA(Leu) = N-terminal L-leucyl-L-arginyl-[protein] + tRNA(Leu) + H(+). The enzyme catalyses L-phenylalanyl-tRNA(Phe) + an N-terminal L-alpha-aminoacyl-[protein] = an N-terminal L-phenylalanyl-L-alpha-aminoacyl-[protein] + tRNA(Phe). Its function is as follows. Functions in the N-end rule pathway of protein degradation where it conjugates Leu, Phe and, less efficiently, Met from aminoacyl-tRNAs to the N-termini of proteins containing an N-terminal arginine or lysine. The protein is Leucyl/phenylalanyl-tRNA--protein transferase of Shewanella baltica (strain OS155 / ATCC BAA-1091).